The following is a 1039-amino-acid chain: Probable inorganic carbon transporter subunit DabA 1 (1039 aa).

Residues cysteine 462, aspartate 464, histidine 721, and cysteine 736 each coordinate Zn(2+).

The protein belongs to the inorganic carbon transporter (TC 9.A.2) DabA family. As to quaternary structure, forms a complex with DabB. Zn(2+) is required as a cofactor.

Its subcellular location is the cell inner membrane. Its function is as follows. Part of an energy-coupled inorganic carbon pump. The chain is Probable inorganic carbon transporter subunit DabA 1 from Nitrobacter hamburgensis (strain DSM 10229 / NCIMB 13809 / X14).